We begin with the raw amino-acid sequence, 357 residues long: Probable glutamine amidotransferase DUG3 (357 aa).

C2 acts as the For GATase activity in catalysis. Positions 2 to 260 (CRFLIFKGKQ…PGEYRVERLD (259 aa)) constitute a Glutamine amidotransferase type-2 domain.

Belongs to the DUG3 family. In terms of assembly, component of the GSH degradosomal complex composed of at least DUG1, DUG2 and DUG3.

The protein resides in the cytoplasm. Component of the GSH degradosomal complex involved in the degradation of glutathione (GSH) and other peptides containing a gamma-glu-X bond. In Saccharomyces cerevisiae (strain ATCC 204508 / S288c) (Baker's yeast), this protein is Probable glutamine amidotransferase DUG3 (DUG3).